A 274-amino-acid chain; its full sequence is Thymidylate synthase (274 aa).

R21 contributes to the dUMP binding site. Position 51 (H51) interacts with (6R)-5,10-methylene-5,6,7,8-tetrahydrofolate. DUMP is bound at residue 123–124; the sequence is RR. C156 (nucleophile) is an active-site residue. DUMP contacts are provided by residues 176–179, N187, and 217–219; these read RSAD and HIY. Residue D179 coordinates (6R)-5,10-methylene-5,6,7,8-tetrahydrofolate. Position 273 (A273) interacts with (6R)-5,10-methylene-5,6,7,8-tetrahydrofolate.

It belongs to the thymidylate synthase family. Bacterial-type ThyA subfamily. Homodimer.

The protein localises to the cytoplasm. It catalyses the reaction dUMP + (6R)-5,10-methylene-5,6,7,8-tetrahydrofolate = 7,8-dihydrofolate + dTMP. The protein operates within pyrimidine metabolism; dTTP biosynthesis. Functionally, catalyzes the reductive methylation of 2'-deoxyuridine-5'-monophosphate (dUMP) to 2'-deoxythymidine-5'-monophosphate (dTMP) while utilizing 5,10-methylenetetrahydrofolate (mTHF) as the methyl donor and reductant in the reaction, yielding dihydrofolate (DHF) as a by-product. This enzymatic reaction provides an intracellular de novo source of dTMP, an essential precursor for DNA biosynthesis. The chain is Thymidylate synthase from Flavobacterium psychrophilum (strain ATCC 49511 / DSM 21280 / CIP 103535 / JIP02/86).